Reading from the N-terminus, the 421-residue chain is Enolase (421 aa).

Gln-165 is a binding site for (2R)-2-phosphoglycerate. The active-site Proton donor is the Glu-207. Residues Asp-244, Glu-285, and Asp-312 each coordinate Mg(2+). (2R)-2-phosphoglycerate is bound by residues Lys-337, Arg-366, Ser-367, and Lys-388. Lys-337 acts as the Proton acceptor in catalysis.

This sequence belongs to the enolase family. Requires Mg(2+) as cofactor.

It localises to the cytoplasm. It is found in the secreted. The protein localises to the cell surface. It carries out the reaction (2R)-2-phosphoglycerate = phosphoenolpyruvate + H2O. It functions in the pathway carbohydrate degradation; glycolysis; pyruvate from D-glyceraldehyde 3-phosphate: step 4/5. In terms of biological role, catalyzes the reversible conversion of 2-phosphoglycerate (2-PG) into phosphoenolpyruvate (PEP). It is essential for the degradation of carbohydrates via glycolysis. This chain is Enolase, found in Ehrlichia ruminantium (strain Welgevonden).